The following is a 440-amino-acid chain: 5-methylthioadenosine/S-adenosylhomocysteine deaminase (440 aa).

Zn(2+)-binding residues include histidine 70 and histidine 72. Substrate contacts are provided by glutamate 99 and histidine 191. Histidine 218 provides a ligand contact to Zn(2+). Substrate is bound by residues glutamate 221 and aspartate 306. Position 306 (aspartate 306) interacts with Zn(2+).

The protein belongs to the metallo-dependent hydrolases superfamily. MTA/SAH deaminase family. The cofactor is Zn(2+).

It carries out the reaction S-adenosyl-L-homocysteine + H2O + H(+) = S-inosyl-L-homocysteine + NH4(+). It catalyses the reaction S-methyl-5'-thioadenosine + H2O + H(+) = S-methyl-5'-thioinosine + NH4(+). Its function is as follows. Catalyzes the deamination of 5-methylthioadenosine and S-adenosyl-L-homocysteine into 5-methylthioinosine and S-inosyl-L-homocysteine, respectively. Is also able to deaminate adenosine. The protein is 5-methylthioadenosine/S-adenosylhomocysteine deaminase of Nitratidesulfovibrio vulgaris (strain DSM 19637 / Miyazaki F) (Desulfovibrio vulgaris).